The primary structure comprises 382 residues: Lipid-A-disaccharide synthase (382 aa).

This sequence belongs to the LpxB family.

The enzyme catalyses 2-N,3-O-bis[(3R)-3-hydroxytetradecanoyl]-alpha-D-glucosaminyl 1-phosphate + UDP-2-N,3-O-bis[(3R)-3-hydroxytetradecanoyl]-alpha-D-glucosamine = lipid A disaccharide (E. coli) + UDP + H(+). The catalysed reaction is a lipid X + a UDP-2-N,3-O-bis[(3R)-3-hydroxyacyl]-alpha-D-glucosamine = a lipid A disaccharide + UDP + H(+). Its pathway is glycolipid biosynthesis; lipid IV(A) biosynthesis; lipid IV(A) from (3R)-3-hydroxytetradecanoyl-[acyl-carrier-protein] and UDP-N-acetyl-alpha-D-glucosamine: step 5/6. In terms of biological role, condensation of UDP-2,3-diacylglucosamine and 2,3-diacylglucosamine-1-phosphate to form lipid A disaccharide, a precursor of lipid A, a phosphorylated glycolipid that anchors the lipopolysaccharide to the outer membrane of the cell. The chain is Lipid-A-disaccharide synthase from Escherichia coli O17:K52:H18 (strain UMN026 / ExPEC).